We begin with the raw amino-acid sequence, 203 residues long: Early nodulin-like protein 9 (203 aa).

An N-terminal signal peptide occupies residues 1-27 (MARNLKSMMLCGFGLLCFLMIVDRAYA). Positions 28–130 (REFTVGGATG…NEKLVVIVMA (103 aa)) constitute a Phytocyanin domain. A disulfide bond links Cys84 and Cys118. A glycan (N-linked (GlcNAc...) asparagine) is linked at Asn103. The tract at residues 134 to 181 (GNKNTASSPPSPAPAPSGESAPSPPVSGTFEMTPAPTPTTSEDTPNSA) is disordered. Residue Ser180 is the site of GPI-anchor amidated serine attachment. A propeptide spans 181-203 (AASSLSFVAALLGAALASTLFLH) (removed in mature form).

It belongs to the early nodulin-like (ENODL) family. As to expression, specifically observed at the plasma membrane of sieve elements in vascular tissues of leaves, stems, roots, flowers and reproductive organs. Absent from companion cells.

The protein resides in the cell membrane. Functionally, may act as a carbohydrate transporter. Mainly required for reproductive functions. This chain is Early nodulin-like protein 9, found in Arabidopsis thaliana (Mouse-ear cress).